We begin with the raw amino-acid sequence, 659 residues long: uncharacterized protein (659 aa).

The signal sequence occupies residues 1 to 25; sequence MVKRRLSAFGNAFLIYFIIFRLCCC. The Lumenal portion of the chain corresponds to 26 to 556; the sequence is SPQTSHWCKY…LYQESSFQKR (531 aa). 4 N-linked (GlcNAc...) asparagine glycosylation sites follow: N94, N111, N128, and N142. Residues 173–335 enclose the SUN domain; it reads AATIDSNIDE…SLLRVYGKTM (163 aa). N393 and N415 each carry an N-linked (GlcNAc...) asparagine glycan. The tract at residues 417-445 is disordered; it reads TGKSESYPATSTRSFNDISPSSSSSYSTA. Residues 423 to 434 show a composition bias toward polar residues; it reads YPATSTRSFNDI. N-linked (GlcNAc...) asparagine glycans are attached at residues N495 and N504. Residues 557-574 form a helical membrane-spanning segment; it reads LLMLQLTVLIVLTVYMAV. Residues 575–659 are Cytoplasmic-facing; sequence SRLPENLPTT…IIHSRSHSVC (85 aa). Disordered regions lie at residues 580–603 and 632–659; these read NLPT…SRDE and KRDP…HSVC. A compositionally biased stretch (polar residues) spans 581–592; sequence LPTTRSSSNNPI. The segment covering 641-651 has biased composition (basic and acidic residues); the sequence is SIHEREQDKII.

It belongs to the SLP1 family. As to quaternary structure, interacts with EMP65.

The protein localises to the endoplasmic reticulum membrane. In terms of biological role, may be involved in membrane protein folding. This is an uncharacterized protein from Schizosaccharomyces pombe (strain 972 / ATCC 24843) (Fission yeast).